The following is a 310-amino-acid chain: Methionyl-tRNA formyltransferase (310 aa).

Ser109–Pro112 serves as a coordination point for (6S)-5,6,7,8-tetrahydrofolate.

The protein belongs to the Fmt family.

It catalyses the reaction L-methionyl-tRNA(fMet) + (6R)-10-formyltetrahydrofolate = N-formyl-L-methionyl-tRNA(fMet) + (6S)-5,6,7,8-tetrahydrofolate + H(+). In terms of biological role, attaches a formyl group to the free amino group of methionyl-tRNA(fMet). The formyl group appears to play a dual role in the initiator identity of N-formylmethionyl-tRNA by promoting its recognition by IF2 and preventing the misappropriation of this tRNA by the elongation apparatus. This is Methionyl-tRNA formyltransferase from Staphylococcus epidermidis (strain ATCC 12228 / FDA PCI 1200).